The sequence spans 412 residues: Inactive serine protease 35 (412 aa).

The N-terminal stretch at 1–23 (MGAMFFGLMLFTLGWTLIDGSES) is a signal peptide. An N-linked (GlcNAc...) asparagine glycan is attached at Asn-110. A Peptidase S1 domain is found at 124 to 407 (VYGTDSRFSI…ICLWMHGDDA (284 aa)). Cysteines 154 and 170 form a disulfide. A compositionally biased stretch (basic residues) spans 192-207 (RNKGGGKRRRGSRRNR). The segment at 192–246 (RNKGGGKRRRGSRRNRREVSGAGREGSQDSLKETAKAGRRRKGSARRQRAADGRP) is disordered. A compositionally biased stretch (basic and acidic residues) spans 217–227 (GSQDSLKETAK). Over residues 228-239 (AGRRRKGSARRQ) the composition is skewed to basic residues.

Belongs to the peptidase S1 family.

It localises to the secreted. This is Inactive serine protease 35 (PRSS35) from Bos taurus (Bovine).